A 179-amino-acid chain; its full sequence is Large ribosomal subunit protein uL5 (179 aa).

It belongs to the universal ribosomal protein uL5 family. In terms of assembly, part of the 50S ribosomal subunit; part of the 5S rRNA/L5/L18/L25 subcomplex. Contacts the 5S rRNA and the P site tRNA. Forms a bridge to the 30S subunit in the 70S ribosome.

This is one of the proteins that bind and probably mediate the attachment of the 5S RNA into the large ribosomal subunit, where it forms part of the central protuberance. In the 70S ribosome it contacts protein S13 of the 30S subunit (bridge B1b), connecting the 2 subunits; this bridge is implicated in subunit movement. Contacts the P site tRNA; the 5S rRNA and some of its associated proteins might help stabilize positioning of ribosome-bound tRNAs. The protein is Large ribosomal subunit protein uL5 of Yersinia enterocolitica serotype O:8 / biotype 1B (strain NCTC 13174 / 8081).